The primary structure comprises 546 residues: MASASSGPAAAGFSSLDAGAPAGTAAASGIKRATVSEGPSASVMPVKKIGHRSVDSSGETTYKKTTSSALKGAIQLGITHTVGSLSTKPERDVLMQDFYVVESIFFPSEGSNLTPAHHYNDFRFKTYAPVAFRYFRELFGIRPDDYLYSLCSEPLIELSNSGASGSLFYVSSDDEFIIKTVQHKEAEFLQKLLPGYYMNLNQNPRTLLPKFYGLYCVQAGGKNIRIVVMNNLLPRSVKMHMKYDLKGSTYKRRASQKEREKTLPTFKDLDFLQDIPDGLFLDADMYSALCKTLQRDCLVLQSFKIMDYSLLMSIHNMDHAQREPTSNDTQYSADTRRPAPQKALYSTAMESIQGEARRGGTVETEDHMGGIPARNNKGERLLLYIGIIDILQSYRFVKKLEHSWKALVHDGDTVSVHRPGFYAERFQRFMCNTVFKKIPLKPSPTKKFRSGPSFSRRSGPSGNSCTSQLMASGEHRAQVTTKAEVEPDVHLGRPDVLPQTPPLEEISEGSPVPGPSFSPVVGQPLQILNLSSTLEKLDVAESEFTH.

Residues 66-434 enclose the PIPK domain; the sequence is TSSALKGAIQ…RFQRFMCNTV (369 aa). Lys-88 participates in a covalent cross-link: Glycyl lysine isopeptide (Lys-Gly) (interchain with G-Cter in ubiquitin). Disordered stretches follow at residues 442-475 and 491-518; these read PSPT…SGEH and LGRP…PSFS. 2 stretches are compositionally biased toward low complexity: residues 450 to 462 and 509 to 518; these read SGPS…GPSG and GSPVPGPSFS.

As to quaternary structure, interacts with RAC1. Interacts with TUT1. Forms a complex with CDH1/E-cadherin, CTNNB1/beta-catenin and CTNND1 at the plasma membrane upon calcium stimulation. Found in a ternary complex with IRS1 and DGKZ in the absence of insulin stimulation. Interacts with DGKZ. Interacts with PIP4K2C; the interaction inhibits PIP5K1A kinase activity. In terms of tissue distribution, highest expression in brain. Also detected in skeletal muscle, testis, brain and lung.

The protein localises to the cell membrane. It localises to the cytoplasm. The protein resides in the nucleus. It is found in the nucleus speckle. Its subcellular location is the cell projection. The protein localises to the ruffle. It localises to the lamellipodium. The catalysed reaction is a 1,2-diacyl-sn-glycero-3-phospho-(1D-myo-inositol 4-phosphate) + ATP = a 1,2-diacyl-sn-glycero-3-phospho-(1D-myo-inositol-4,5-bisphosphate) + ADP + H(+). It catalyses the reaction 1-octadecanoyl-2-(5Z,8Z,11Z,14Z)-eicosatetraenoyl-sn-glycero-3-phospho-1D-myo-inositol 4-phosphate + ATP = 1-octadecanoyl-2-(5Z,8Z,11Z,14Z)-eicosatetraenoyl-sn-glycero-3-phospho-1D-myo-inositol 4,5-bisphosphate + ADP + H(+). The enzyme catalyses 1,2-dihexadecanoyl-sn-glycero-3-phospho-(1D-myo-inositol-4-phosphate) + ATP = 1,2-dihexadecanoyl-sn-glycero-3-phospho-(1D-myo-inositol-4,5-bisphosphate) + ADP + H(+). It carries out the reaction 1-octadecanoyl-2-(9Z)-octadecenoyl-sn-glycero-3-phospho-1D-myo-inositol 4-phosphate + ATP = 1-octadecanoyl-2-(9Z)-octadecenoyl-sn-glycero-3-phospho-1D-myo-inositol 4,5-bisphosphate + ADP + H(+). The catalysed reaction is 1-octadecanoyl-2-(9Z)-octadecenoyl-sn-glycero-3-phospho-1D-myo-inositol + ATP = 1-octadecanoyl-2-(9Z)-octadecenoyl-sn-glycero-3-phospho-1D-myo-inositol 5-phosphate + ADP + H(+). It catalyses the reaction 1-octadecanoyl-2-(9Z,12Z)-octadecadienoyl-sn-glycero-3-phospho-1D-myo-inositol + ATP = 1-octadecanoyl-2-(9Z,12Z)-octadecadienoyl-sn-glycero-3-phospho-1D-myo-inositol 5-phosphate + ADP + H(+). The enzyme catalyses 1-octadecanoyl-2-(5Z,8Z,11Z,14Z-eicosatetraenoyl)-sn-glycero-3-phospho-(1D-myo-inositol) + ATP = 1-octadecanoyl-2-(5Z,8Z,11Z,14Z)-eicosatetraenoyl-sn-glycero-3-phospho-1D-myo-inositol 5-phosphate + ADP + H(+). It carries out the reaction 1,2-di-(9Z,12Z)-octadecadienoyl-sn-glycero-3-phospho-1D-myo-inositol + ATP = 1,2-di(9Z,12Z)-octadecadienoyl-sn-glycero-3-phospho-1D-myo-inositol 5-phosphate + ADP + H(+). Its activity is regulated as follows. Activated by phosphatidic acid. Catalyzes the phosphorylation of phosphatidylinositol 4-phosphate (PtdIns(4)P/PI4P) to form phosphatidylinositol 4,5-bisphosphate (PtdIns(4,5)P2/PIP2), a lipid second messenger that regulates several cellular processes such as signal transduction, vesicle trafficking, actin cytoskeleton dynamics, cell adhesion, and cell motility. PtdIns(4,5)P2 can directly act as a second messenger or can be utilized as a precursor to generate other second messengers: inositol 1,4,5-trisphosphate (IP3), diacylglycerol (DAG) or phosphatidylinositol-3,4,5-trisphosphate (PtdIns(3,4,5)P3/PIP3). PIP5K1A-mediated phosphorylation of PtdIns(4)P is the predominant pathway for PtdIns(4,5)P2 synthesis. Can also use phosphatidylinositol (PtdIns) as substrate in vitro. Together with PIP5K1C, is required for phagocytosis, both enzymes regulating different types of actin remodeling at sequential steps. Promotes particle ingestion by activating the WAS GTPase-binding protein that induces Arp2/3 dependent actin polymerization at the nascent phagocytic cup. Together with PIP5K1B, is required, after stimulation by G-protein coupled receptors, for the synthesis of IP3 that will induce stable platelet adhesion. Recruited to the plasma membrane by the E-cadherin/beta-catenin complex where it provides the substrate PtdIns(4,5)P2 for the production of PtdIns(3,4,5)P3, IP3 and DAG, that will mobilize internal calcium and drive keratinocyte differentiation. Positively regulates insulin-induced translocation of SLC2A4 to the cell membrane in adipocytes. Together with PIP5K1C has a role during embryogenesis. Independently of its catalytic activity, is required for membrane ruffling formation, actin organization and focal adhesion formation during directional cell migration by controlling integrin-induced translocation of the small GTPase RAC1 to the plasma membrane. Also functions in the nucleus where it acts as an activator of TUT1 adenylyltransferase activity in nuclear speckles, thereby regulating mRNA polyadenylation of a select set of mRNAs. This Mus musculus (Mouse) protein is Phosphatidylinositol 4-phosphate 5-kinase type-1 alpha.